The primary structure comprises 206 residues: Ribosomal RNA large subunit methyltransferase E (206 aa).

5 residues coordinate S-adenosyl-L-methionine: Gly-60, Trp-62, Asp-80, Asp-96, and Asp-121. The active-site Proton acceptor is the Lys-161.

This sequence belongs to the class I-like SAM-binding methyltransferase superfamily. RNA methyltransferase RlmE family.

It is found in the cytoplasm. The catalysed reaction is uridine(2552) in 23S rRNA + S-adenosyl-L-methionine = 2'-O-methyluridine(2552) in 23S rRNA + S-adenosyl-L-homocysteine + H(+). In terms of biological role, specifically methylates the uridine in position 2552 of 23S rRNA at the 2'-O position of the ribose in the fully assembled 50S ribosomal subunit. The protein is Ribosomal RNA large subunit methyltransferase E of Hydrogenovibrio crunogenus (strain DSM 25203 / XCL-2) (Thiomicrospira crunogena).